The sequence spans 174 residues: Endoribonuclease YbeY (174 aa).

Positions 124, 128, and 134 each coordinate Zn(2+).

It belongs to the endoribonuclease YbeY family. It depends on Zn(2+) as a cofactor.

Its subcellular location is the cytoplasm. Its function is as follows. Single strand-specific metallo-endoribonuclease involved in late-stage 70S ribosome quality control and in maturation of the 3' terminus of the 16S rRNA. In Synechococcus elongatus (strain ATCC 33912 / PCC 7942 / FACHB-805) (Anacystis nidulans R2), this protein is Endoribonuclease YbeY.